Consider the following 83-residue polypeptide: MPKTVANTKPMDVLKNALSRNVLIDVKGNREYSGILEGYDVYMNVVLQNASEIINGENKGVFDRILVRGDNVIFVSPSKGDNE.

The 73-residue stretch at 9–81 (KPMDVLKNAL…VIFVSPSKGD (73 aa)) folds into the Sm domain.

This sequence belongs to the snRNP Sm proteins family.

In Thermoplasma volcanium (strain ATCC 51530 / DSM 4299 / JCM 9571 / NBRC 15438 / GSS1), this protein is Putative snRNP Sm-like protein.